The chain runs to 159 residues: Photosystem II extrinsic protein U, chloroplastic (159 aa).

Belongs to the PsbU family. As to quaternary structure, PSII is composed of 1 copy each of membrane proteins PsbA, PsbB, PsbC, PsbD, PsbE, PsbF, PsbH, PsbI, PsbJ, PsbK, PsbL, PsbM, PsbT, PsbX, PsbY, PsbZ, Psb30/Ycf12, at least 3 peripheral proteins of the oxygen-evolving complex and a large number of cofactors. It forms dimeric complexes. Part of the oxygen-evolving complex of photosystem II.

It localises to the plastid. The protein resides in the chloroplast thylakoid membrane. In terms of biological role, one of the extrinsic, lumenal subunits of photosystem II (PSII). PSII is a light-driven water plastoquinone oxidoreductase, using light energy to abstract electrons from H(2)O, generating a proton gradient subsequently used for ATP formation. The extrinsic proteins stabilize the structure of photosystem II oxygen-evolving complex (OEC), the ion environment of oxygen evolution and protect the OEC against heat-induced inactivation. The polypeptide is Photosystem II extrinsic protein U, chloroplastic (Karenia brevis (Red tide dinoflagellate)).